We begin with the raw amino-acid sequence, 229 residues long: Lipoprotein-releasing system ATP-binding protein LolD (229 aa).

Residues 9-228 enclose the ABC transporter domain; the sequence is HGLRKIYREA…QDGNLVQVEV (220 aa). 42–49 is a binding site for ATP; sequence GSSGSGKS.

Belongs to the ABC transporter superfamily. Lipoprotein translocase (TC 3.A.1.125) family. As to quaternary structure, the complex is composed of two ATP-binding proteins (LolD) and two transmembrane proteins (LolC and LolE).

The protein localises to the cell inner membrane. Functionally, part of the ABC transporter complex LolCDE involved in the translocation of mature outer membrane-directed lipoproteins, from the inner membrane to the periplasmic chaperone, LolA. Responsible for the formation of the LolA-lipoprotein complex in an ATP-dependent manner. The chain is Lipoprotein-releasing system ATP-binding protein LolD from Photobacterium profundum (strain SS9).